Reading from the N-terminus, the 426-residue chain is Putative nickel insertion protein (426 aa).

It belongs to the LarC family.

The chain is Putative nickel insertion protein from Nostoc sp. (strain PCC 7120 / SAG 25.82 / UTEX 2576).